Consider the following 286-residue polypeptide: Ribose-5-phosphate isomerase (286 aa).

This sequence belongs to the ribose 5-phosphate isomerase family.

The protein resides in the cytoplasm. It catalyses the reaction aldehydo-D-ribose 5-phosphate = D-ribulose 5-phosphate. It participates in carbohydrate degradation; pentose phosphate pathway; D-ribose 5-phosphate from D-ribulose 5-phosphate (non-oxidative stage): step 1/1. In Mycosarcoma maydis (Corn smut fungus), this protein is Ribose-5-phosphate isomerase (RKI1).